Here is a 314-residue protein sequence, read N- to C-terminus: 2,3-dihydroxyphenylpropionate/2,3-dihydroxicinnamic acid 1,2-dioxygenase (314 aa).

The active-site Proton donor is the H115. Catalysis depends on H179, which acts as the Proton acceptor.

The protein belongs to the LigB/MhpB extradiol dioxygenase family. In terms of assembly, homotetramer. The cofactor is Fe(2+).

It carries out the reaction 3-(2,3-dihydroxyphenyl)propanoate + O2 = (2Z,4E)-2-hydroxy-6-oxonona-2,4-dienedioate + H(+). It catalyses the reaction (2E)-3-(2,3-dihydroxyphenyl)prop-2-enoate + O2 = (2Z,4E,7E)-2-hydroxy-6-oxonona-2,4,7-trienedioate + H(+). It participates in aromatic compound metabolism; 3-phenylpropanoate degradation. Functionally, catalyzes the non-heme iron(II)-dependent oxidative cleavage of 2,3-dihydroxyphenylpropionic acid and 2,3-dihydroxicinnamic acid into 2-hydroxy-6-ketononadienedioate and 2-hydroxy-6-ketononatrienedioate, respectively. The sequence is that of 2,3-dihydroxyphenylpropionate/2,3-dihydroxicinnamic acid 1,2-dioxygenase from Escherichia coli O81 (strain ED1a).